The primary structure comprises 1398 residues: Protein timeless (1398 aa).

Residues 237–268 form a necessary for normal circadian rhythm region; the sequence is VSTLQKLLSLWFEASLSESSEDNESNTSPPKQ. Disordered regions lie at residues 254 to 300, 322 to 452, 478 to 555, 1127 to 1147, and 1220 to 1239; these read ESSE…GGMR, ARVP…QKFN, TKGK…LRRK, TASS…SSVS, and NHRT…SSTT. Residues 273–290 show a composition bias toward low complexity; the sequence is SSPMLTSDPTSDSSDNGS. The segment covering 291-300 has biased composition (gly residues); it reads NGRGMGGGMR. Positions 338–355 are enriched in polar residues; the sequence is MTGNDSEQPGSPEQSQPA. Basic and acidic residues predominate over residues 365–375; sequence EDQRHRQLNEH. The segment covering 376–390 has biased composition (acidic residues); the sequence is GEEDEDEDEVEEEEY. Composition is skewed to polar residues over residues 400 to 421, 440 to 452, and 504 to 515; these read LNLT…SSAP, ASTS…QKFN, and QVENQESISTSS. The span at 522-531 shows a compositional bias: low complexity; the sequence is QGKPQHQKPP. Residues 550-560 carry the Nuclear localization signal motif; sequence KELRRKKLVKR.

The protein belongs to the timeless family. As to quaternary structure, forms a heterodimer with period (PER); the complex then translocates into the nucleus. Post-translationally, phosphorylated with a circadian rhythmicity. As to expression, expressed in head, photoreceptors, lateral neurons and glial cells in the lamina and medulla of the optic lobes. Expression follows a light-dark cycle, levels show a significant decrease at the end of the night and then remain low throughout the light period (at protein level).

It localises to the nucleus. Its subcellular location is the cytoplasm. The protein localises to the perinuclear region. Required for the production of circadian rhythms. The biological cycle depends on the rhythmic formation and nuclear localization of the TIM-PER complex. Light induces the degradation of TIM, which promotes elimination of PER. Nuclear activity of the heterodimer coordinatively regulates PER and TIM transcription through a negative feedback loop. Behaves as a negative element in circadian transcriptional loop. Does not appear to bind DNA, suggesting indirect transcriptional inhibition. This is Protein timeless (tim) from Drosophila melanogaster (Fruit fly).